A 513-amino-acid polypeptide reads, in one-letter code: Light-independent protochlorophyllide reductase subunit B (513 aa).

D36 contributes to the [4Fe-4S] cluster binding site. The active-site Proton donor is D299. 434–435 lines the substrate pocket; that stretch reads GM.

This sequence belongs to the ChlB/BchB/BchZ family. As to quaternary structure, protochlorophyllide reductase is composed of three subunits; ChlL, ChlN and ChlB. Forms a heterotetramer of two ChlB and two ChlN subunits. [4Fe-4S] cluster serves as cofactor.

It localises to the plastid. The protein resides in the chloroplast. The enzyme catalyses chlorophyllide a + oxidized 2[4Fe-4S]-[ferredoxin] + 2 ADP + 2 phosphate = protochlorophyllide a + reduced 2[4Fe-4S]-[ferredoxin] + 2 ATP + 2 H2O. Its pathway is porphyrin-containing compound metabolism; chlorophyll biosynthesis (light-independent). Functionally, component of the dark-operative protochlorophyllide reductase (DPOR) that uses Mg-ATP and reduced ferredoxin to reduce ring D of protochlorophyllide (Pchlide) to form chlorophyllide a (Chlide). This reaction is light-independent. The NB-protein (ChlN-ChlB) is the catalytic component of the complex. The polypeptide is Light-independent protochlorophyllide reductase subunit B (Cycas taitungensis (Prince sago)).